Consider the following 611-residue polypeptide: Probable methyltransferase PMT19 (611 aa).

The Cytoplasmic portion of the chain corresponds to 1–15 (MNPSQQHLPKLCPKR). A helical; Signal-anchor for type II membrane protein transmembrane segment spans residues 16–36 (LFLFFTPFLLFSLYYILTTIK). Residues 37 to 611 (TITISSQDRH…TILIVDNSIK (575 aa)) lie on the Lumenal side of the membrane. 6 N-linked (GlcNAc...) asparagine glycosylation sites follow: Asn68, Asn97, Asn289, Asn408, Asn411, and Asn587.

Belongs to the methyltransferase superfamily.

It localises to the endoplasmic reticulum membrane. The polypeptide is Probable methyltransferase PMT19 (Arabidopsis thaliana (Mouse-ear cress)).